The following is a 90-amino-acid chain: Probable Fe(2+)-trafficking protein (90 aa).

Belongs to the Fe(2+)-trafficking protein family.

Could be a mediator in iron transactions between iron acquisition and iron-requiring processes, such as synthesis and/or repair of Fe-S clusters in biosynthetic enzymes. The polypeptide is Probable Fe(2+)-trafficking protein (Pseudoalteromonas translucida (strain TAC 125)).